Here is a 558-residue protein sequence, read N- to C-terminus: ATP-dependent RNA helicase ROK1 (558 aa).

A disordered region spans residues 26-91 (PSAKQQQYEQ…EEAPPLEIQT (66 aa)). 2 stretches are compositionally biased toward basic and acidic residues: residues 34-53 (EQHKEDTLQHQVDKEIDFFH) and 64-81 (DSTDSKHTKEEKKEKKED). The Q motif motif lies at 120 to 148 (DMIGRFRLDSKLLSNLLEAEFVEPTAIQC). Residues 151-329 (LPISLSGRDL…HSIMRDPIRV (179 aa)) form the Helicase ATP-binding domain. 164-171 (APTGSGKT) contacts ATP. Positions 276–279 (DEAD) match the DEAD box motif. In terms of domain architecture, Helicase C-terminal spans 340–504 (TIDQKLVFTG…GFSGWMENMT (165 aa)). The interval 509 to 558 (NEKKKVKHKEIDRKDISTVPKLVKHKRKQREQMIEASKKRKQEETRNALQ) is disordered. Over residues 538–558 (REQMIEASKKRKQEETRNALQ) the composition is skewed to basic and acidic residues.

The protein belongs to the DEAD box helicase family. DDX52/ROK1 subfamily. As to quaternary structure, interacts with the U3 snoRNA and is associated with the 90S and 40S pre-ribosomes.

Its subcellular location is the nucleus. It localises to the nucleolus. It carries out the reaction ATP + H2O = ADP + phosphate + H(+). ATP-dependent RNA helicase involved in 40S ribosomal subunit biogenesis. Required for the processing and cleavage of 35S pre-rRNA at sites A0, A1, and A2, leading to mature 18S rRNA. This is ATP-dependent RNA helicase ROK1 (ROK1) from Scheffersomyces stipitis (strain ATCC 58785 / CBS 6054 / NBRC 10063 / NRRL Y-11545) (Yeast).